The sequence spans 427 residues: Glutamate-1-semialdehyde 2,1-aminomutase (427 aa).

The residue at position 265 (Lys265) is an N6-(pyridoxal phosphate)lysine.

The protein belongs to the class-III pyridoxal-phosphate-dependent aminotransferase family. HemL subfamily. In terms of assembly, homodimer. The cofactor is pyridoxal 5'-phosphate.

Its subcellular location is the cytoplasm. The catalysed reaction is (S)-4-amino-5-oxopentanoate = 5-aminolevulinate. It participates in porphyrin-containing compound metabolism; protoporphyrin-IX biosynthesis; 5-aminolevulinate from L-glutamyl-tRNA(Glu): step 2/2. In Paraburkholderia phytofirmans (strain DSM 17436 / LMG 22146 / PsJN) (Burkholderia phytofirmans), this protein is Glutamate-1-semialdehyde 2,1-aminomutase.